We begin with the raw amino-acid sequence, 320 residues long: Ribosome production factor 2 homolog (320 aa).

The 205-residue stretch at 30 to 234 (RTMLFLDGRK…IRRTKIASED (205 aa)) folds into the Brix domain. Positions 268–320 (LGKQQTGSIQTRRVKALRKTPEEKKENRQRKKVALKAAAAEALASQGNNPFSS) are disordered. Positions 302 to 311 (LKAAAAEALA) are enriched in low complexity.

It belongs to the RPF2 family.

The protein localises to the nucleus. It is found in the nucleolus. In terms of biological role, required for normal assembly of the mitotic spindle. May be involved in both centrosome-dependent and centrosome-independent spindle assembly programs. The sequence is that of Ribosome production factor 2 homolog from Drosophila melanogaster (Fruit fly).